A 424-amino-acid polypeptide reads, in one-letter code: Homoserine O-succinyltransferase (424 aa).

Residues Asn-67 to Asp-381 enclose the AB hydrolase-1 domain. Ser-173 acts as the Nucleophile in catalysis. A substrate-binding site is contributed by Arg-243. Residues Asp-342 and His-375 contribute to the active site. A substrate-binding site is contributed by Asp-376.

It belongs to the AB hydrolase superfamily. MetX family. Homodimer.

It localises to the cytoplasm. It carries out the reaction L-homoserine + succinyl-CoA = O-succinyl-L-homoserine + CoA. Its pathway is amino-acid biosynthesis; L-methionine biosynthesis via de novo pathway; O-succinyl-L-homoserine from L-homoserine: step 1/1. In terms of biological role, transfers a succinyl group from succinyl-CoA to L-homoserine, forming succinyl-L-homoserine. In vitro, also has serine succinyl transferase activity. The protein is Homoserine O-succinyltransferase of Bordetella petrii (strain ATCC BAA-461 / DSM 12804 / CCUG 43448).